A 308-amino-acid polypeptide reads, in one-letter code: UDP-N-acetylenolpyruvoylglucosamine reductase (308 aa).

The FAD-binding PCMH-type domain maps to Arg30–His213. Residue Arg176 is part of the active site. Ser227 serves as the catalytic Proton donor. Glu297 is a catalytic residue.

Belongs to the MurB family. Requires FAD as cofactor.

It localises to the cytoplasm. It catalyses the reaction UDP-N-acetyl-alpha-D-muramate + NADP(+) = UDP-N-acetyl-3-O-(1-carboxyvinyl)-alpha-D-glucosamine + NADPH + H(+). It participates in cell wall biogenesis; peptidoglycan biosynthesis. In terms of biological role, cell wall formation. This is UDP-N-acetylenolpyruvoylglucosamine reductase from Acaryochloris marina (strain MBIC 11017).